The primary structure comprises 377 residues: Probable G-protein coupled receptor 27 (377 aa).

Over 1 to 24 (MANASEPGGGGGGAEAAALGLRLA) the chain is Extracellular. N-linked (GlcNAc...) asparagine glycosylation occurs at Asn3. The chain crosses the membrane as a helical span at residues 25-45 (TLSLLLCVSLAGNVLFALLIV). The Cytoplasmic portion of the chain corresponds to 46 to 56 (RERSLHRAPYY). A helical transmembrane segment spans residues 57–77 (LLLDLCLADGLRALACLPAVM). At 78–98 (LAARRAAAAAGTPPGALGCKL) the chain is on the extracellular side. A disulfide bond links Cys96 and Cys173. The helical transmembrane segment at 99-119 (LAFLAALFCFHAAFLLLGVGV) threads the bilayer. Residues 120–140 (TRYLAIAHHRFYAERLAGWPC) are Cytoplasmic-facing. Residues 141–161 (AAMLVCAAWALALAAAFPPVL) traverse the membrane as a helical segment. Topologically, residues 162–183 (DGGGADDEDAPCALEQRPDGAP) are extracellular. A helical membrane pass occupies residues 184 to 204 (GALGFLLLLAAVVGATHLVYL). The Cytoplasmic segment spans residues 205 to 287 (RLLFFIHDRR…FKTEKRLCKM (83 aa)). Residues 288-308 (FYAITLLFLLLWGPYVVASYL) form a helical membrane-spanning segment. Residues 309-322 (RVLVRPGAVPQAYL) lie on the Extracellular side of the membrane. Residues 323 to 343 (TASVWLTFAQAGINPVVCFLF) traverse the membrane as a helical segment. Residues 344-377 (NRELRDCFRAQFPCCQSPQATQATLPCDLKGIGL) lie on the Cytoplasmic side of the membrane.

This sequence belongs to the G-protein coupled receptor 1 family. As to expression, expressed as a 3.0 kb transcript, in whole brain, hippocampus, striatum, frontal cortex, thalamus, pons and hypothalamus. A lower molecular weight transcript was detected in all regions examined, except the hypothalamus.

It localises to the cell membrane. Functionally, orphan receptor. Possible candidate for amine-like G-protein coupled receptor. The protein is Probable G-protein coupled receptor 27 (Gpr27) of Rattus norvegicus (Rat).